A 278-amino-acid polypeptide reads, in one-letter code: Large ribosomal subunit protein uL2 (278 aa).

Positions G222–R278 are disordered. The span at I269–R278 shows a compositional bias: basic residues.

The protein belongs to the universal ribosomal protein uL2 family. Part of the 50S ribosomal subunit. Forms a bridge to the 30S subunit in the 70S ribosome.

Functionally, one of the primary rRNA binding proteins. Required for association of the 30S and 50S subunits to form the 70S ribosome, for tRNA binding and peptide bond formation. It has been suggested to have peptidyltransferase activity; this is somewhat controversial. Makes several contacts with the 16S rRNA in the 70S ribosome. This Maricaulis maris (strain MCS10) (Caulobacter maris) protein is Large ribosomal subunit protein uL2.